We begin with the raw amino-acid sequence, 200 residues long: Small ribosomal subunit protein uS4 (200 aa).

The region spanning 94-157 (SRLDNLVFRA…QTSPQVKDAV (64 aa)) is the S4 RNA-binding domain.

This sequence belongs to the universal ribosomal protein uS4 family. Part of the 30S ribosomal subunit. Contacts protein S5. The interaction surface between S4 and S5 is involved in control of translational fidelity.

One of the primary rRNA binding proteins, it binds directly to 16S rRNA where it nucleates assembly of the body of the 30S subunit. Functionally, with S5 and S12 plays an important role in translational accuracy. The chain is Small ribosomal subunit protein uS4 from Metamycoplasma arthritidis (strain 158L3-1) (Mycoplasma arthritidis).